The chain runs to 1088 residues: DNA mismatch repair protein MutS (1088 aa).

Positions P498 to H579 are disordered. A compositionally biased stretch (acidic residues) spans D537 to E546. ATP is bound at residue G816–S823. The interval L1000–F1048 is disordered.

It belongs to the DNA mismatch repair MutS family.

Functionally, this protein is involved in the repair of mismatches in DNA. It is possible that it carries out the mismatch recognition step. This protein has a weak ATPase activity. In Roseiflexus castenholzii (strain DSM 13941 / HLO8), this protein is DNA mismatch repair protein MutS.